The primary structure comprises 954 residues: Glycine dehydrogenase (decarboxylating) (954 aa).

An N6-(pyridoxal phosphate)lysine modification is found at Lys-700.

It belongs to the GcvP family. As to quaternary structure, the glycine cleavage system is composed of four proteins: P, T, L and H. Pyridoxal 5'-phosphate serves as cofactor.

It catalyses the reaction N(6)-[(R)-lipoyl]-L-lysyl-[glycine-cleavage complex H protein] + glycine + H(+) = N(6)-[(R)-S(8)-aminomethyldihydrolipoyl]-L-lysyl-[glycine-cleavage complex H protein] + CO2. Functionally, the glycine cleavage system catalyzes the degradation of glycine. The P protein binds the alpha-amino group of glycine through its pyridoxal phosphate cofactor; CO(2) is released and the remaining methylamine moiety is then transferred to the lipoamide cofactor of the H protein. The sequence is that of Glycine dehydrogenase (decarboxylating) from Dinoroseobacter shibae (strain DSM 16493 / NCIMB 14021 / DFL 12).